The primary structure comprises 216 residues: LexA repressor (216 aa).

The segment at residues 28–48 (RAEIAAEFGFSSPNAAEEHLR) is a DNA-binding region (H-T-H motif). Catalysis depends on for autocatalytic cleavage activity residues serine 134 and lysine 171.

Belongs to the peptidase S24 family. Homodimer.

The catalysed reaction is Hydrolysis of Ala-|-Gly bond in repressor LexA.. In terms of biological role, represses a number of genes involved in the response to DNA damage (SOS response), including recA and lexA. In the presence of single-stranded DNA, RecA interacts with LexA causing an autocatalytic cleavage which disrupts the DNA-binding part of LexA, leading to derepression of the SOS regulon and eventually DNA repair. The sequence is that of LexA repressor from Ralstonia nicotianae (strain ATCC BAA-1114 / GMI1000) (Ralstonia solanacearum).